Here is a 449-residue protein sequence, read N- to C-terminus: Cytochrome P450 monooxygenase iliC (449 aa).

A helical membrane pass occupies residues Thr-28 to Gly-44. Cys-397 serves as a coordination point for heme.

Belongs to the cytochrome P450 family. Requires heme as cofactor.

It is found in the membrane. The enzyme catalyses (3E,5S)-3-[(2E,4E,8S,10E,12Z)-1-hydroxy-4,8-dimethyltetradeca-2,4,10,12-tetraen-1-ylidene]-5-[(4-hydroxyphenyl)methyl]pyrrolidine-2,4-dione + reduced [NADPH--hemoprotein reductase] + O2 = 3-[(2E,4E,8S,10E,12Z)-4,8-dimethyltetradeca-2,4,10,12-tetraenoyl]-4-hydroxy-5-(4-hydroxyphenyl)-1,2-dihydropyridin-2-one + oxidized [NADPH--hemoprotein reductase] + 2 H2O. It functions in the pathway mycotoxin biosynthesis. Functionally, cytochrome P450 monooxygenase; part of the gene cluster that mediates the biosynthesis of ilicicolin H, a 4-hydroxy-2-pyridonealkaloid that has potent and broad antifungal activities by inhibiting the mitochondrial respiration chain. IliC catalyzes the ring expansion of the tetramate intermediate to the acyclic 2-pyridone intermediate that contains the trans bis-diene chain. The biosynthesis of ilicicolin H starts with formation of the tetramic acid by the hybrid PKS-NRPS synthetase iliA with the partnering trans-enoyl reductase iliB since iliA lacks a designated enoylreductase (ER) domain. The cytochrome P450 monooxygenase iliC then catalyzes the ring expansion of the tetramate to the acyclic 2-pyridone. The pericyclase iliD further converts the acyclic 2-pyridone into 8-epi-ilicicolin H. 8-epi-ilicicolin H might then spontaneously convert to ilicicolin H since ilicicolin H is produced in the absence of the epimerase iliE, in contrast to what was observed for the Talaromyces variabilis ilicolin H biosynthetic pathway. The chain is Cytochrome P450 monooxygenase iliC from Hypocrea jecorina (strain QM6a) (Trichoderma reesei).